The primary structure comprises 117 residues: Glycine cleavage system H-like protein (117 aa).

A Lipoyl-binding domain is found at 21–103 (IVRLGLSSRM…ESEGWFVVLQ (83 aa)). Lys-62 carries the post-translational modification N6-lipoyllysine.

It belongs to the GcvH family. Requires (R)-lipoate as cofactor.

In Chlamydia muridarum (strain MoPn / Nigg), this protein is Glycine cleavage system H-like protein.